Reading from the N-terminus, the 942-residue chain is Lambda-carrageenase (942 aa).

A signal peptide spans 1-25 (MKIKILSAMIASSLLIGCVIPTVKA).

In terms of assembly, monomer.

It localises to the secreted. The catalysed reaction is Endohydrolysis of (1-&gt;4)-beta-linkages in the backbone of lambda-carrageenan, resulting in the tetrasaccharide alpha-D-Galp2,6S2-(1-&gt;3)-beta-D-Galp2S-(1-&gt;4)-alpha-D-Galp2,6S2-(1-&gt;3)-D-Galp2S.. Its function is as follows. Hydrolyzes lambda-carrageenan with inversion of anomeric configuration. Does not hydrolyze iota- and kappa-carrageenans, agarose or porphyran. The sequence is that of Lambda-carrageenase from Pseudoalteromonas sp.